Consider the following 182-residue polypeptide: Isopentenyl-diphosphate Delta-isomerase (182 aa).

Mn(2+) contacts are provided by histidine 25 and histidine 32. The Nudix hydrolase domain maps to 30 to 164 (LLHLAFSSWL…PWAFSPWMVM (135 aa)). Cysteine 67 is an active-site residue. A Mg(2+)-binding site is contributed by cysteine 67. Histidine 69 serves as a coordination point for Mn(2+). Mg(2+) is bound at residue glutamate 87. The Mn(2+) site is built by glutamate 114 and glutamate 116. Residue glutamate 116 is part of the active site.

Belongs to the IPP isomerase type 1 family. In terms of assembly, homodimer. The cofactor is Mg(2+). Mn(2+) serves as cofactor.

It is found in the cytoplasm. It catalyses the reaction isopentenyl diphosphate = dimethylallyl diphosphate. Its pathway is isoprenoid biosynthesis; dimethylallyl diphosphate biosynthesis; dimethylallyl diphosphate from isopentenyl diphosphate: step 1/1. Functionally, catalyzes the 1,3-allylic rearrangement of the homoallylic substrate isopentenyl (IPP) to its highly electrophilic allylic isomer, dimethylallyl diphosphate (DMAPP). The polypeptide is Isopentenyl-diphosphate Delta-isomerase (Shigella boydii serotype 4 (strain Sb227)).